Reading from the N-terminus, the 238-residue chain is uncharacterized protein (238 aa).

The next 3 helical transmembrane spans lie at 19-39 (IVIEAFPGTGLVGSIAGFQII), 79-99 (IILFSDIIISPFKINGLAEFI), and 141-161 (YVEIFDFGVVGGMGGNLLIKC).

It is found in the cell membrane. This is an uncharacterized protein from Methanocaldococcus jannaschii (strain ATCC 43067 / DSM 2661 / JAL-1 / JCM 10045 / NBRC 100440) (Methanococcus jannaschii).